The following is a 295-amino-acid chain: Golgi-associated RAB2 interactor protein 1A (295 aa).

The tract at residues 187-206 (MPNSSTETTPESSRPASSQS) is disordered. A compositionally biased stretch (low complexity) spans 190–206 (SSTETTPESSRPASSQS). Phosphoserine is present on residues serine 220, serine 221, serine 251, and serine 255.

This sequence belongs to the GARIN family. In terms of assembly, interacts (via N-terminus) with RAB2B (in GTP-bound form).

It localises to the golgi apparatus. RAB2B effector protein required for accurate acrosome formation and normal male fertility. In Rattus norvegicus (Rat), this protein is Golgi-associated RAB2 interactor protein 1A (Garin1a).